The chain runs to 329 residues: Sulfate-binding protein (329 aa).

A signal peptide spans 1–19 (MKKWGVGFTLLLASTSILA).

The protein belongs to the prokaryotic sulfate-binding protein family.

The protein localises to the periplasm. In terms of biological role, this protein specifically binds sulfate and is involved in its transmembrane transport. The sequence is that of Sulfate-binding protein (sbp) from Salmonella typhimurium (strain LT2 / SGSC1412 / ATCC 700720).